A 257-amino-acid chain; its full sequence is 1-(5-phosphoribosyl)-5-[(5-phosphoribosylamino)methylideneamino] imidazole-4-carboxamide isomerase (257 aa).

Residue Asp8 is the Proton acceptor of the active site. Residue Asp129 is the Proton donor of the active site.

The protein belongs to the HisA/HisF family.

Its subcellular location is the cytoplasm. It catalyses the reaction 1-(5-phospho-beta-D-ribosyl)-5-[(5-phospho-beta-D-ribosylamino)methylideneamino]imidazole-4-carboxamide = 5-[(5-phospho-1-deoxy-D-ribulos-1-ylimino)methylamino]-1-(5-phospho-beta-D-ribosyl)imidazole-4-carboxamide. It participates in amino-acid biosynthesis; L-histidine biosynthesis; L-histidine from 5-phospho-alpha-D-ribose 1-diphosphate: step 4/9. The sequence is that of 1-(5-phosphoribosyl)-5-[(5-phosphoribosylamino)methylideneamino] imidazole-4-carboxamide isomerase from Rippkaea orientalis (strain PCC 8801 / RF-1) (Cyanothece sp. (strain PCC 8801)).